The chain runs to 115 residues: Large ribosomal subunit protein bL20 (115 aa).

It belongs to the bacterial ribosomal protein bL20 family.

Functionally, binds directly to 23S ribosomal RNA and is necessary for the in vitro assembly process of the 50S ribosomal subunit. It is not involved in the protein synthesizing functions of that subunit. The sequence is that of Large ribosomal subunit protein bL20 from Chlorobium limicola (strain DSM 245 / NBRC 103803 / 6330).